The primary structure comprises 311 residues: DNA-directed RNA polymerase subunit alpha (311 aa).

The alpha N-terminal domain (alpha-NTD) stretch occupies residues 1 to 227 (MAQFQIECVE…NLFCSLRNLD (227 aa)). An alpha C-terminal domain (alpha-CTD) region spans residues 242–311 (ISQVLIEELQ…GISLPKEKTD (70 aa)).

This sequence belongs to the RNA polymerase alpha chain family. In terms of assembly, in plastids the minimal PEP RNA polymerase catalytic core is composed of four subunits: alpha, beta, beta', and beta''. When a (nuclear-encoded) sigma factor is associated with the core the holoenzyme is formed, which can initiate transcription.

The protein resides in the plastid. Its subcellular location is the chloroplast. It carries out the reaction RNA(n) + a ribonucleoside 5'-triphosphate = RNA(n+1) + diphosphate. Functionally, DNA-dependent RNA polymerase catalyzes the transcription of DNA into RNA using the four ribonucleoside triphosphates as substrates. In Porphyra purpurea (Red seaweed), this protein is DNA-directed RNA polymerase subunit alpha.